A 125-amino-acid chain; its full sequence is UPF0231 protein APL_0968 (125 aa).

This sequence belongs to the UPF0231 family.

The chain is UPF0231 protein APL_0968 from Actinobacillus pleuropneumoniae serotype 5b (strain L20).